We begin with the raw amino-acid sequence, 119 residues long: Acidic phospholipase A2 DE-II (119 aa).

Intrachain disulfides connect Cys11-Cys72, Cys26-Cys118, Cys28-Cys44, Cys43-Cys99, Cys50-Cys92, Cys60-Cys85, and Cys79-Cys90. 3 residues coordinate Ca(2+): Tyr27, Gly29, and Gly31. His47 is an active-site residue. Residue Asp48 participates in Ca(2+) binding. Residue Asp93 is part of the active site.

The protein belongs to the phospholipase A2 family. Group I subfamily. D49 sub-subfamily. Requires Ca(2+) as cofactor. As to expression, expressed by the venom gland.

It localises to the secreted. The enzyme catalyses a 1,2-diacyl-sn-glycero-3-phosphocholine + H2O = a 1-acyl-sn-glycero-3-phosphocholine + a fatty acid + H(+). Its function is as follows. PLA2 catalyzes the calcium-dependent hydrolysis of the 2-acyl groups in 3-sn-phosphoglycerides. This is Acidic phospholipase A2 DE-II from Naja melanoleuca (Forest cobra).